Reading from the N-terminus, the 88-residue chain is Small ribosomal subunit protein bS20 (88 aa).

Residues 1–28 (MANIKSQIKRNRQNEKRRLRNKSVKSSL) form a disordered region. The span at 7-23 (QIKRNRQNEKRRLRNKS) shows a compositional bias: basic residues.

Belongs to the bacterial ribosomal protein bS20 family.

Binds directly to 16S ribosomal RNA. The polypeptide is Small ribosomal subunit protein bS20 (Salinispora tropica (strain ATCC BAA-916 / DSM 44818 / JCM 13857 / NBRC 105044 / CNB-440)).